The following is a 1005-amino-acid chain: Ephrin type-A receptor 8 (1005 aa).

The signal sequence occupies residues 1–27; that stretch reads MAPARGRLPPALWVVTAAAAAATCVSA. Topologically, residues 28-542 are extracellular; the sequence is ARGEVNLLDT…KPRPRYDTRT (515 aa). The region spanning 31–209 is the Eph LBD domain; that stretch reads EVNLLDTSTI…YYKKCPAMVR (179 aa). Fibronectin type-III domains are found at residues 328–438 and 439–534; these read PPSA…TNQA and APSQ…TGKP. N-linked (GlcNAc...) asparagine glycosylation is found at Asn-340, Asn-407, and Asn-432. Residues 543 to 563 traverse the membrane as a helical segment; that stretch reads IVWICLTLITGLVVLLLLLIC. The mediates interaction with ANKS1A and ANKS1B stretch occupies residues 564–570; that stretch reads KKRHCGY. The Cytoplasmic portion of the chain corresponds to 564 to 1005; that stretch reads KKRHCGYSKA…TSTQGPRRHL (442 aa). Residues 589-644 form a mediates interaction with PIK3CG and required for endocytosis region; it reads APPPVFLPLHHPPGKLPEPQFYAEPHTYEEPGRAGRSFTREIEASRIHIEKIIGSG. Tyr-616 carries the post-translational modification Phosphotyrosine; by autocatalysis. The Protein kinase domain maps to 635–896; it reads IHIEKIIGSG…QIVSVLDALI (262 aa). ATP-binding positions include 641 to 649 and Lys-667; that span reads IGSGDSGEV. Asp-760 serves as the catalytic Proton acceptor. Residue Tyr-839 is modified to Phosphotyrosine; by autocatalysis. One can recognise an SAM domain in the interval 930 to 994; it reads GGGLTVGDWL…LGSIQTMRAQ (65 aa). The PDZ-binding signature appears at 1003 to 1005; that stretch reads RHL.

The protein belongs to the protein kinase superfamily. Tyr protein kinase family. Ephrin receptor subfamily. As to quaternary structure, heterotetramer upon binding of the ligand. The heterotetramer is composed of an ephrin dimer and a receptor dimer. Oligomerization is probably required to induce biological responses. May also form heterodimers with other ephrin receptors. Interacts with FYN; possible downstream effector of EPHA8 in regulation of cell adhesion. Interacts with PIK3CG; regulates integrin-mediated cell adhesion to substrate. Interacts with TIAM1; regulates clathrin-mediated endocytosis of EPHA8. Interacts with ANKS1A and ANKS1B; EPHA8 kinase activity-independent but stimulated by EPHA8 ubiquitination. Phosphorylated. Phosphorylation is stimulated upon binding of its ligands including EFNA2, EFNA3 and EFNA5. Autophosphorylation on Tyr-616 is critical for association with FYN. Autophosphorylation on Tyr-839 modulates tyrosine kinase activity. In terms of processing, ubiquitinated. Ubiquitination by CBL regulates the receptor stability and activity through proteasomal degradation. ANKS1A prevents ubiquitination and degradation.

It localises to the cell membrane. Its subcellular location is the cell projection. The protein localises to the early endosome membrane. The enzyme catalyses L-tyrosyl-[protein] + ATP = O-phospho-L-tyrosyl-[protein] + ADP + H(+). Functionally, receptor tyrosine kinase which binds promiscuously GPI-anchored ephrin-A family ligands residing on adjacent cells, leading to contact-dependent bidirectional signaling into neighboring cells. The signaling pathway downstream of the receptor is referred to as forward signaling while the signaling pathway downstream of the ephrin ligand is referred to as reverse signaling. The GPI-anchored ephrin-A EFNA2, EFNA3, and EFNA5 are able to activate EPHA8 through phosphorylation. With EFNA5 may regulate integrin-mediated cell adhesion and migration on fibronectin substrate but also neurite outgrowth. During development of the nervous system also plays a role in axon guidance. Downstream effectors of the EPHA8 signaling pathway include FYN which promotes cell adhesion upon activation by EPHA8 and the MAP kinases in the stimulation of neurite outgrowth. The chain is Ephrin type-A receptor 8 (EPHA8) from Homo sapiens (Human).